Consider the following 579-residue polypeptide: uncharacterized protein (579 aa).

11 consecutive transmembrane segments (helical) span residues 13–35, 39–61, 66–83, 93–110, 130–152, 162–181, 201–223, 238–257, 264–286, 296–315, and 324–346; these read DLIKQYPLAMSFIFISTAFIPWI, SISRDMIVVLLLPIYFSTVLLLN, ANGLAIAYAILITLAFYF, AYWGLLLIHFVLFVTYPL, LAIVLAGIICICAVLVLNSIEYL, IVPKTLLFIMCFFTPVFFLI, LIVNFIFSPVVILYTLIVYLYLA, YIIMPYIALGLCCQGLRLLL, GFYRVFAYLSIAPLVLLWVGIHT, IRVMLVVLASMMTLFILFSM, and LFSLTACLLLFISTILTSPYYLA.

The protein localises to the cell membrane. This is an uncharacterized protein from Pasteurella multocida (strain Pm70).